A 345-amino-acid polypeptide reads, in one-letter code: KH domain-containing, RNA-binding, signal transduction-associated protein 2 (345 aa).

One can recognise a KH domain in the interval 65–131 (LIPVKQYPKF…AKHAHLSDEL (67 aa)). 2 disordered regions span residues 178–224 (LNGS…TRGA) and 321–345 (SRST…YGRY). The segment covering 336 to 345 (GYREHPYGRY) has biased composition (basic and acidic residues).

This sequence belongs to the KHDRBS family.

The protein localises to the nucleus. In terms of biological role, RNA-binding protein that plays a role in the regulation of alternative splicing. In Xenopus tropicalis (Western clawed frog), this protein is KH domain-containing, RNA-binding, signal transduction-associated protein 2 (khdrbs2).